A 178-amino-acid chain; its full sequence is Cytidylate kinase (178 aa).

An ATP-binding site is contributed by 7 to 15 (GLPGTGTTT).

It belongs to the cytidylate kinase family. Type 2 subfamily.

The protein resides in the cytoplasm. The catalysed reaction is CMP + ATP = CDP + ADP. It carries out the reaction dCMP + ATP = dCDP + ADP. In Methanococcus aeolicus (strain ATCC BAA-1280 / DSM 17508 / OCM 812 / Nankai-3), this protein is Cytidylate kinase.